A 662-amino-acid chain; its full sequence is Junctophilin-1 (662 aa).

Residues 1-640 lie on the Cytoplasmic side of the membrane; it reads MTGGRFDFDD…EREANSGPNS (640 aa). MORN repeat units follow at residues 14–36, 38–59, 60–82, 106–128, and 129–151; these read YCGG…KGQG, YSGS…SGNT, YQGY…KWMY, YEGT…DGGT, and YQGQ…PYGM. Ser157, Ser216, and Ser220 each carry phosphoserine. The disordered stretch occupies residues 228-247; that stretch reads SKSSISSKRSSVRSDAAMSR. 2 MORN repeats span residues 281 to 303 and 304 to 326; these read YMGE…NGMK and YEGE…DGSK. Residues 432 to 443 are compositionally biased toward basic and acidic residues; the sequence is VDAKENPEEKVP. The segment at 432-634 is disordered; that stretch reads VDAKENPEEK…DSCPSMEREA (203 aa). Thr448 bears the Phosphothreonine mark. The residue at position 452 (Ser452) is a Phosphoserine. Thr461 carries the post-translational modification Phosphothreonine. 3 positions are modified to phosphoserine: Ser465, Ser469, and Ser475. Low complexity predominate over residues 584–599; sequence KPSPNKWSPPKSVTKP. A compositionally biased stretch (basic and acidic residues) spans 600-614; the sequence is VAKESKAEPKAKKSE. The chain crosses the membrane as a helical; Anchor for type IV membrane protein span at residues 641–661; that stretch reads VMIVLVMLLNIGLAILFVHFL.

The protein belongs to the junctophilin family.

The protein localises to the cell membrane. It is found in the endoplasmic reticulum membrane. It localises to the sarcoplasmic reticulum membrane. Its function is as follows. Junctophilins contribute to the formation of junctional membrane complexes (JMCs) which link the plasma membrane with the endoplasmic or sarcoplasmic reticulum in excitable cells. Provides a structural foundation for functional cross-talk between the cell surface and intracellular calcium release channels. JPH1 contributes to the construction of the skeletal muscle triad by linking the t-tubule (transverse-tubule) and SR (sarcoplasmic reticulum) membranes. The protein is Junctophilin-1 (JPH1) of Oryctolagus cuniculus (Rabbit).